We begin with the raw amino-acid sequence, 329 residues long: GTP 3',8-cyclase (329 aa).

One can recognise a Radical SAM core domain in the interval 8–234 (AFARKFYYLR…QLRQRSDGPA (227 aa)). Residue arginine 17 participates in GTP binding. 2 residues coordinate [4Fe-4S] cluster: cysteine 24 and cysteine 28. Tyrosine 30 lines the S-adenosyl-L-methionine pocket. Cysteine 31 contributes to the [4Fe-4S] cluster binding site. Arginine 68 is a GTP binding site. Glycine 72 is a binding site for S-adenosyl-L-methionine. Threonine 99 is a binding site for GTP. Residue serine 123 coordinates S-adenosyl-L-methionine. Lysine 160 contributes to the GTP binding site. Methionine 194 contributes to the S-adenosyl-L-methionine binding site. [4Fe-4S] cluster-binding residues include cysteine 257 and cysteine 260. GTP is bound at residue 262-264 (RLR). Residue cysteine 274 coordinates [4Fe-4S] cluster.

This sequence belongs to the radical SAM superfamily. MoaA family. Monomer and homodimer. The cofactor is [4Fe-4S] cluster.

It catalyses the reaction GTP + AH2 + S-adenosyl-L-methionine = (8S)-3',8-cyclo-7,8-dihydroguanosine 5'-triphosphate + 5'-deoxyadenosine + L-methionine + A + H(+). It participates in cofactor biosynthesis; molybdopterin biosynthesis. Catalyzes the cyclization of GTP to (8S)-3',8-cyclo-7,8-dihydroguanosine 5'-triphosphate. In Escherichia coli O45:K1 (strain S88 / ExPEC), this protein is GTP 3',8-cyclase.